The sequence spans 290 residues: Acetylglutamate kinase (290 aa).

Substrate is bound by residues 65–66 (GG), arginine 87, and asparagine 186.

The protein belongs to the acetylglutamate kinase family. ArgB subfamily.

It is found in the cytoplasm. The catalysed reaction is N-acetyl-L-glutamate + ATP = N-acetyl-L-glutamyl 5-phosphate + ADP. Its pathway is amino-acid biosynthesis; L-arginine biosynthesis; N(2)-acetyl-L-ornithine from L-glutamate: step 2/4. Catalyzes the ATP-dependent phosphorylation of N-acetyl-L-glutamate. The polypeptide is Acetylglutamate kinase (Mycobacterium sp. (strain KMS)).